Reading from the N-terminus, the 692-residue chain is Transforming growth factor beta activator LRRC33 (692 aa).

The signal sequence occupies residues 1–24 (MEFLPLWLCLGFHFLIVEWRSGRG). At 25 to 650 (TATAASQGGC…CKWGQVDTGL (626 aa)) the chain is on the extracellular side. The LRRNT domain occupies 29–56 (ASQGGCKVVDRVADCRSLNLASVPSGLP). LRR repeat units follow at residues 58-79 (HSRM…SLQA), 82-103 (RLED…AFHE), 106-127 (HLQN…SATA), 133-155 (RLRR…MLQN), 158-179 (SLEV…VFEG), 182-203 (RLVE…AFDG), 206-227 (ELRR…SLTQ), 228-239 (LRFLNVSYNILE), 251-272 (ELEI…PQCG), and 273-294 (KLHT…YNTS). The N-linked (GlcNAc...) asparagine glycan is linked to Asn74. A glycan (N-linked (GlcNAc...) asparagine) is linked at Asn155. An N-linked (GlcNAc...) asparagine glycan is attached at Asn232. Residues Asn292, Asn309, and Asn312 are each glycosylated (N-linked (GlcNAc...) asparagine). 11 LRR repeats span residues 329–350 (ALRF…FLKK), 353–374 (SLSH…EHEP), 377–398 (ALTE…PGLT), 403–424 (NLRV…LFHS), 427–448 (SITT…VPLD), 463–484 (SLRS…PFQG), 486–507 (SLTH…SPLS), 512–533 (TLQV…MDFS), 537–558 (NLRE…KGSS), 559–580 (ALQT…VVSE), and 585–605 (GLQT…EGWG). A glycan (N-linked (GlcNAc...) asparagine) is linked at Asn408. A glycan (N-linked (GlcNAc...) asparagine) is linked at Asn500. The LRRCT domain occupies 606-643 (ALQHFKTIADLSMVTCNLSSKIIRVVELPEGIPQDCKW). Asn622 carries an N-linked (GlcNAc...) asparagine glycan. A helical transmembrane segment spans residues 651–671 (FYLVLILPSCLTLLVASTVIF). Residues 672-692 (LTFKKPLLQVIKSRCHWSSIY) lie on the Cytoplasmic side of the membrane.

Belongs to the LRRC32/LRRC33 family. Interacts (via LRR repeats) with TLR2, TLR3, TLR4, TLR9 and probably other Toll-like receptors. Interacts with CYBB/NOX2; the interaction is direct. Interacts with TGFB1; associates via disulfide bonds with the Latency-associated peptide chain (LAP) regulatory chain of TGFB1, leading to regulate activation of TGF-beta-1.

Its subcellular location is the cell membrane. The protein localises to the endoplasmic reticulum membrane. Its function is as follows. Key regulator of transforming growth factor beta-1 (TGFB1) specifically required for microglia function in the nervous system. Required for activation of latent TGF-beta-1 in macrophages and microglia: associates specifically via disulfide bonds with the Latency-associated peptide (LAP), which is the regulatory chain of TGFB1, and regulates integrin-dependent activation of TGF-beta-1. TGF-beta-1 activation mediated by LRRC33/NRROS is highly localized: there is little spreading of TGF-beta-1 activated from one microglial cell to neighboring microglia, suggesting the existence of localized and selective activation of TGF-beta-1 by LRRC33/NRROS. Indirectly plays a role in Toll-like receptor (TLR) signaling: ability to inhibit TLR-mediated NF-kappa-B activation and cytokine production is probably a consequence of its role in TGF-beta-1 signaling. This chain is Transforming growth factor beta activator LRRC33, found in Rattus norvegicus (Rat).